The chain runs to 68 residues: UPF0253 protein VFMJ11_0680 (68 aa).

The protein belongs to the UPF0253 family.

This is UPF0253 protein VFMJ11_0680 from Aliivibrio fischeri (strain MJ11) (Vibrio fischeri).